The chain runs to 419 residues: UDP-N-acetylglucosamine 1-carboxyvinyltransferase (419 aa).

Position 22 to 23 (22 to 23 (KN)) interacts with phosphoenolpyruvate. Arginine 91 provides a ligand contact to UDP-N-acetyl-alpha-D-glucosamine. Residue cysteine 115 is the Proton donor of the active site. Cysteine 115 bears the 2-(S-cysteinyl)pyruvic acid O-phosphothioketal mark. UDP-N-acetyl-alpha-D-glucosamine contacts are provided by residues 120-124 (RPVDL), 160-163 (KVSV), aspartate 305, and valine 327.

The protein belongs to the EPSP synthase family. MurA subfamily.

It is found in the cytoplasm. The enzyme catalyses phosphoenolpyruvate + UDP-N-acetyl-alpha-D-glucosamine = UDP-N-acetyl-3-O-(1-carboxyvinyl)-alpha-D-glucosamine + phosphate. It functions in the pathway cell wall biogenesis; peptidoglycan biosynthesis. In terms of biological role, cell wall formation. Adds enolpyruvyl to UDP-N-acetylglucosamine. The sequence is that of UDP-N-acetylglucosamine 1-carboxyvinyltransferase from Escherichia fergusonii (strain ATCC 35469 / DSM 13698 / CCUG 18766 / IAM 14443 / JCM 21226 / LMG 7866 / NBRC 102419 / NCTC 12128 / CDC 0568-73).